Reading from the N-terminus, the 1439-residue chain is Receptor-type tyrosine-protein phosphatase kappa (1439 aa).

An N-terminal signal peptide occupies residues 1 to 26 (MDTTAAAALPAFVALLLLSPWPLLGS). Over 27 to 752 (AQGQFSAGGC…PAKQTDRVVK (726 aa)) the chain is Extracellular. An MAM domain is found at 31-194 (FSAGGCTFDD…IQVLSYPCDK (164 aa)). 3 N-linked (GlcNAc...) asparagine glycosylation sites follow: asparagine 101, asparagine 140, and asparagine 211. Residues 196–281 (PHFLRLGDVE…TQSERGSGVS (86 aa)) enclose the Ig-like C2-type domain. A disulfide bond links cysteine 216 and cysteine 270. Fibronectin type-III domains follow at residues 294 to 389 (PIAP…CAEP), 392 to 488 (TPKT…TDED), 491 to 595 (GPVP…SAPT), and 597 to 680 (PDYE…GNLP). 9 N-linked (GlcNAc...) asparagine glycosylation sites follow: asparagine 416, asparagine 424, asparagine 436, asparagine 462, asparagine 552, asparagine 586, asparagine 590, asparagine 607, and asparagine 690. A helical transmembrane segment spans residues 753-774 (IAGISAGILVFILLLLVVILIV). Residues 775 to 1439 (KKSKLAKKRK…DVALEYLESS (665 aa)) are Cytoplasmic-facing. Position 856 is a phosphoserine (serine 856). Tyrosine-protein phosphatase domains are found at residues 887–1141 (FKEE…ILEA) and 1173–1435 (LKDE…ALEY). Substrate contacts are provided by residues aspartate 1050, 1082–1088 (CSAGAGR), and glutamine 1126. The active-site Phosphocysteine intermediate is the cysteine 1082. The active-site Phosphocysteine intermediate is the cysteine 1376.

Belongs to the protein-tyrosine phosphatase family. Receptor class 2B subfamily. In terms of processing, this protein undergoes proteolytic processing. As to expression, high levels in lung, brain and colon; less in liver, pancreas, stomach, kidney, placenta and mammary carcinoma.

The protein resides in the cell junction. The protein localises to the adherens junction. It is found in the cell membrane. It carries out the reaction O-phospho-L-tyrosyl-[protein] + H2O = L-tyrosyl-[protein] + phosphate. Its function is as follows. Regulation of processes involving cell contact and adhesion such as growth control, tumor invasion, and metastasis. Negative regulator of EGFR signaling pathway. Forms complexes with beta-catenin and gamma-catenin/plakoglobin. Beta-catenin may be a substrate for the catalytic activity of PTPRK/PTP-kappa. In Homo sapiens (Human), this protein is Receptor-type tyrosine-protein phosphatase kappa (PTPRK).